Reading from the N-terminus, the 187-residue chain is 1,6-anhydro-N-acetylmuramyl-L-alanine amidase AmpD (187 aa).

The region spanning 29–167 (TLLVVHNISL…APERKTDPGP (139 aa)) is the N-acetylmuramoyl-L-alanine amidase domain. His-34 contributes to the Zn(2+) binding site. Glu-116 serves as the catalytic Proton acceptor. Zn(2+)-binding residues include His-154 and Asp-164.

Belongs to the N-acetylmuramoyl-L-alanine amidase 2 family. The cofactor is Zn(2+).

Its subcellular location is the cytoplasm. It carries out the reaction Hydrolyzes the link between N-acetylmuramoyl residues and L-amino acid residues in certain cell-wall glycopeptides.. In terms of biological role, involved in cell wall peptidoglycan recycling. Specifically cleaves the amide bond between the lactyl group of N-acetylmuramic acid and the alpha-amino group of the L-alanine in degradation products containing an anhydro N-acetylmuramyl moiety. This Enterobacter cloacae protein is 1,6-anhydro-N-acetylmuramyl-L-alanine amidase AmpD.